The chain runs to 862 residues: Eukaryotic translation initiation factor 3 subunit C (862 aa).

A compositionally biased stretch (gly residues) spans 1-10 (MSRFFYGGGS). The segment at 1 to 81 (MSRFFYGGGS…DEEKTTVVKS (81 aa)) is disordered. The segment covering 16–52 (SSDEEELYERDEEEQSEEEESSEEEETSEEGSDDEEG) has biased composition (acidic residues). The region spanning 601 to 775 (FHMHINLELL…GAIVFRKGVE (175 aa)) is the PCI domain. The interval 814–862 (RDQGAGARGGRGGGRGGHARGGARFPGQQGRRPGGQQFGGGALGGAIKA) is disordered. The segment covering 819–833 (GARGGRGGGRGGHAR) has biased composition (gly residues). The span at 835–844 (GARFPGQQGR) shows a compositional bias: low complexity. Positions 845-862 (RPGGQQFGGGALGGAIKA) are enriched in gly residues.

It belongs to the eIF-3 subunit C family. In terms of assembly, component of the eukaryotic translation initiation factor 3 (eIF-3) complex.

It is found in the cytoplasm. Component of the eukaryotic translation initiation factor 3 (eIF-3) complex, which is involved in protein synthesis of a specialized repertoire of mRNAs and, together with other initiation factors, stimulates binding of mRNA and methionyl-tRNAi to the 40S ribosome. The eIF-3 complex specifically targets and initiates translation of a subset of mRNAs involved in cell proliferation. The chain is Eukaryotic translation initiation factor 3 subunit C (nip1) from Aspergillus clavatus (strain ATCC 1007 / CBS 513.65 / DSM 816 / NCTC 3887 / NRRL 1 / QM 1276 / 107).